The sequence spans 358 residues: Photosystem II protein D1 3 (358 aa).

The next 3 helical transmembrane spans lie at 28–45 (YIGW…AATT), 117–132 (HFLI…QWEL), and 141–155 (WICV…AAMA). H117 contacts chlorophyll a. Y125 contributes to the pheophytin a binding site. [CaMn4O5] cluster is bound by residues D169 and E188. Residues 196–217 (FHMLGVAGVFGGSLFSAMHGSL) traverse the membrane as a helical segment. H197 contacts chlorophyll a. Residues H214 and 263 to 264 (SF) contribute to the a quinone site. H214 serves as a coordination point for Fe cation. Position 271 (H271) interacts with Fe cation. Residues 273 to 287 (LLGAWPVVGIWFTSM) traverse the membrane as a helical segment. Residues H331, E332, D341, and A343 each contribute to the [CaMn4O5] cluster site. The propeptide occupies 344-358 (TVESTPVALQAPAIG).

This sequence belongs to the reaction center PufL/M/PsbA/D family. As to quaternary structure, PSII is composed of 1 copy each of membrane proteins PsbA, PsbB, PsbC, PsbD, PsbE, PsbF, PsbH, PsbI, PsbJ, PsbK, PsbL, PsbM, PsbT, PsbX, PsbY, PsbZ, Psb30/Ycf12, peripheral proteins PsbO, CyanoQ (PsbQ), PsbU, PsbV and a large number of cofactors. It forms dimeric complexes. Requires The D1/D2 heterodimer binds P680, chlorophylls that are the primary electron donor of PSII, and subsequent electron acceptors. It shares a non-heme iron and each subunit binds pheophytin, quinone, additional chlorophylls, carotenoids and lipids. D1 provides most of the ligands for the Mn4-Ca-O5 cluster of the oxygen-evolving complex (OEC). There is also a Cl(-1) ion associated with D1 and D2, which is required for oxygen evolution. The PSII complex binds additional chlorophylls, carotenoids and specific lipids. as cofactor. Post-translationally, tyr-160 forms a radical intermediate that is referred to as redox-active TyrZ, YZ or Y-Z. C-terminally processed by CtpA; processing is essential to allow assembly of the oxygen-evolving complex and thus photosynthetic growth.

It localises to the cellular thylakoid membrane. The enzyme catalyses 2 a plastoquinone + 4 hnu + 2 H2O = 2 a plastoquinol + O2. Functionally, photosystem II (PSII) is a light-driven water:plastoquinone oxidoreductase that uses light energy to abstract electrons from H(2)O, generating O(2) and a proton gradient subsequently used for ATP formation. It consists of a core antenna complex that captures photons, and an electron transfer chain that converts photonic excitation into a charge separation. The D1/D2 (PsbA/PsbD) reaction center heterodimer binds P680, the primary electron donor of PSII as well as several subsequent electron acceptors. This is Photosystem II protein D1 3 from Synechococcus sp. (strain CC9311).